The chain runs to 165 residues: Shikimate kinase (165 aa).

11–16 lines the ATP pocket; the sequence is GAGKTT. Mg(2+) is bound at residue Thr-15. Asp-33, Arg-57, and Gly-78 together coordinate substrate. Arg-116 is an ATP binding site. Arg-134 is a substrate binding site.

This sequence belongs to the shikimate kinase family. Monomer. It depends on Mg(2+) as a cofactor.

Its subcellular location is the cytoplasm. It carries out the reaction shikimate + ATP = 3-phosphoshikimate + ADP + H(+). It participates in metabolic intermediate biosynthesis; chorismate biosynthesis; chorismate from D-erythrose 4-phosphate and phosphoenolpyruvate: step 5/7. Functionally, catalyzes the specific phosphorylation of the 3-hydroxyl group of shikimic acid using ATP as a cosubstrate. The chain is Shikimate kinase from Bacillus cereus (strain G9842).